The following is a 190-amino-acid chain: Glutathione peroxidase 2 (190 aa).

U40 is an active-site residue. U40 is a non-standard amino acid (selenocysteine).

It belongs to the glutathione peroxidase family. Homotetramer.

It localises to the cytoplasm. The protein localises to the cytosol. The enzyme catalyses 2 glutathione + H2O2 = glutathione disulfide + 2 H2O. It catalyses the reaction a hydroperoxy polyunsaturated fatty acid + 2 glutathione = a hydroxy polyunsaturated fatty acid + glutathione disulfide + H2O. The catalysed reaction is tert-butyl hydroperoxide + 2 glutathione = tert-butanol + glutathione disulfide + H2O. It carries out the reaction cumene hydroperoxide + 2 glutathione = 2-phenylpropan-2-ol + glutathione disulfide + H2O. The enzyme catalyses (13S)-hydroperoxy-(9Z,11E)-octadecadienoate + 2 glutathione = (13S)-hydroxy-(9Z,11E)-octadecadienoate + glutathione disulfide + H2O. It catalyses the reaction (5S)-hydroperoxy-(6E,8Z,11Z,14Z)-eicosatetraenoate + 2 glutathione = (5S)-hydroxy-(6E,8Z,11Z,14Z)-eicosatetraenoate + glutathione disulfide + H2O. The catalysed reaction is (12R)-hydroperoxy-(5Z,8Z,10E,14Z)-eicosatetraenoate + 2 glutathione = (12R)-hydroxy-(5Z,8Z,10E,14Z)-eicosatetraenoate + glutathione disulfide + H2O. It carries out the reaction (15S)-hydroperoxy-(5Z,8Z,11Z,13E)-eicosatetraenoate + 2 glutathione = (15S)-hydroxy-(5Z,8Z,11Z,13E)-eicosatetraenoate + glutathione disulfide + H2O. Functionally, catalyzes the reduction of hydroperoxides in a glutathione-dependent manner thus regulating cellular redox homeostasis. Can reduce small soluble hydroperoxides such as H2O2, cumene hydroperoxide and tert-butyl hydroperoxide, as well as several fatty acid-derived hydroperoxides. Cannot reduce phosphatidycholine hydroperoxide. The polypeptide is Glutathione peroxidase 2 (GPX2) (Callithrix jacchus (White-tufted-ear marmoset)).